The chain runs to 291 residues: Ribosomal RNA small subunit methyltransferase A (291 aa).

Residues histidine 37, leucine 39, glycine 64, glutamate 85, aspartate 110, and asparagine 131 each contribute to the S-adenosyl-L-methionine site.

The protein belongs to the class I-like SAM-binding methyltransferase superfamily. rRNA adenine N(6)-methyltransferase family. RsmA subfamily.

It localises to the cytoplasm. The enzyme catalyses adenosine(1518)/adenosine(1519) in 16S rRNA + 4 S-adenosyl-L-methionine = N(6)-dimethyladenosine(1518)/N(6)-dimethyladenosine(1519) in 16S rRNA + 4 S-adenosyl-L-homocysteine + 4 H(+). In terms of biological role, specifically dimethylates two adjacent adenosines (A1518 and A1519) in the loop of a conserved hairpin near the 3'-end of 16S rRNA in the 30S particle. May play a critical role in biogenesis of 30S subunits. In Dehalococcoides mccartyi (strain ATCC BAA-2100 / JCM 16839 / KCTC 5957 / BAV1), this protein is Ribosomal RNA small subunit methyltransferase A.